Here is a 126-residue protein sequence, read N- to C-terminus: Nascent polypeptide-associated complex protein (126 aa).

In terms of domain architecture, NAC-A/B spans 10–77; the sequence is PRMMKQMQKM…AKKVAKEEEK (68 aa).

This sequence belongs to the NAC-alpha family. In terms of assembly, homodimer. Interacts with the ribosome. Binds ribosomal RNA.

Contacts the emerging nascent chain on the ribosome. The sequence is that of Nascent polypeptide-associated complex protein from Methanococcus maripaludis (strain C7 / ATCC BAA-1331).